The sequence spans 261 residues: Pyridoxine-5'-phosphate oxidase (261 aa).

Residue 42-45 (RGDP) participates in pyridoxal 5'-phosphate binding. FMN is bound at residue 95–98 (RMVL). Position 100 (lysine 100) interacts with pyridoxal 5'-phosphate. Residues 110–111 (FT), 116–117 (RK), and glutamine 139 each bind FMN. Tyrosine 157, arginine 161, and serine 165 together coordinate pyridoxal 5'-phosphate. Residues 174–175 (QS) and tryptophan 219 contribute to the FMN site. 225–227 (RLH) serves as a coordination point for pyridoxal 5'-phosphate. Arginine 229 is an FMN binding site. Residue threonine 238 is modified to Phosphothreonine. Serine 241 bears the Phosphoserine mark.

Belongs to the pyridoxamine 5'-phosphate oxidase family. In terms of assembly, homodimer. FMN is required as a cofactor.

It carries out the reaction pyridoxamine 5'-phosphate + O2 + H2O = pyridoxal 5'-phosphate + H2O2 + NH4(+). It catalyses the reaction pyridoxine 5'-phosphate + O2 = pyridoxal 5'-phosphate + H2O2. Its pathway is cofactor metabolism; pyridoxal 5'-phosphate salvage; pyridoxal 5'-phosphate from pyridoxamine 5'-phosphate: step 1/1. It functions in the pathway cofactor metabolism; pyridoxal 5'-phosphate salvage; pyridoxal 5'-phosphate from pyridoxine 5'-phosphate: step 1/1. Functionally, catalyzes the oxidation of either pyridoxine 5'-phosphate (PNP) or pyridoxamine 5'-phosphate (PMP) into pyridoxal 5'-phosphate (PLP). The polypeptide is Pyridoxine-5'-phosphate oxidase (PNPO) (Bos taurus (Bovine)).